The following is a 437-amino-acid chain: Chloride intracellular channel protein 5 (437 aa).

Residues 1–14 (MNDENYSTTIYNRV) are compositionally biased toward polar residues. Positions 1 to 197 (MNDENYSTTI…VSEGNESASA (197 aa)) are disordered. Residues 34–45 (DEVHEDVRREDN) are compositionally biased toward basic and acidic residues. Repeat copies occupy residues 118–125 (QSDSEEPQ), 126–133 (ASDPEEPQ), 134–141 (ASDPEEPQ), and 142–149 (GPDPEEPQ). Residues 118 to 149 (QSDSEEPQASDPEEPQASDPEEPQGPDPEEPQ) form a 4 X 8 AA tandem repeats of [AGQ]-[SP]-D-[PS]-E-E-P-Q region. The span at 121-157 (SEEPQASDPEEPQASDPEEPQGPDPEEPQENGNEMEA) shows a compositional bias: acidic residues. A compositionally biased stretch (polar residues) spans 161–184 (SPSSFTIQNSRAFSTREISPTSYS). Residues 217 to 220 (CPFS) carry the G-site motif. A helical membrane pass occupies residues 219-239 (FSQRLFMILWLKGVVFNVTTV). In terms of domain architecture, GST C-terminal spans 263-427 (NGDVKTDVNK…AADSEIELAY (165 aa)).

The protein belongs to the chloride channel CLIC family. Component of a multimeric complex consisting of several cytoskeletal proteins, including actin, ezrin, alpha-actinin, gelsolin, and IQGAP1. Interacts with AKAP9. Interacts with TPRN. TPRN, CLIC5 and PTPQR form concentric rings at the base of stereocilia and may form a complex. Interacts with EZR, MYO6 and RDX; the proteins may work together as a complex to stabilize linkages between the plasma membrane and subjacent actin cytoskeleton at the stereocilium base. Phosphorylated. In terms of tissue distribution, expressed in most tissues. Higher levels found in kidney, heart, skeletal muscle, T84 and PANC-1 cells.

It is found in the golgi apparatus. Its subcellular location is the cytoplasm. The protein localises to the cytoskeleton. It localises to the microtubule organizing center. The protein resides in the centrosome. It is found in the cell cortex. Its subcellular location is the membrane. The protein localises to the apical cell membrane. It localises to the mitochondrion. The protein resides in the cell projection. It is found in the stereocilium. It carries out the reaction Na(+)(in) = Na(+)(out). The enzyme catalyses K(+)(in) = K(+)(out). It catalyses the reaction chloride(in) = chloride(out). Inhibited by F-actin. Functionally, in the soluble state, catalyzes glutaredoxin-like thiol disulfide exchange reactions with reduced glutathione as electron donor. Can insert into membranes and form non-selective ion channels almost equally permeable to Na(+), K(+) and Cl(-). Required for normal hearing. It is necessary for the formation of stereocilia in the inner ear and normal development of the organ of Corti. May play a role in the regulation of transepithelial ion absorption and secretion. Is required for the development and/or maintenance of the proper glomerular endothelial cell and podocyte architecture. Plays a role in formation of the lens suture in the eye, which is important for normal optical properties of the lens. This Bos taurus (Bovine) protein is Chloride intracellular channel protein 5 (CLIC5).